The primary structure comprises 364 residues: UDP-N-acetylglucosamine--N-acetylmuramyl-(pentapeptide) pyrophosphoryl-undecaprenol N-acetylglucosamine transferase (364 aa).

Residues 10 to 12 (TGG), Asn-124, Ser-195, Ile-250, and Gln-295 contribute to the UDP-N-acetyl-alpha-D-glucosamine site.

The protein belongs to the glycosyltransferase 28 family. MurG subfamily.

The protein resides in the cell membrane. It carries out the reaction di-trans,octa-cis-undecaprenyl diphospho-N-acetyl-alpha-D-muramoyl-L-alanyl-D-glutamyl-meso-2,6-diaminopimeloyl-D-alanyl-D-alanine + UDP-N-acetyl-alpha-D-glucosamine = di-trans,octa-cis-undecaprenyl diphospho-[N-acetyl-alpha-D-glucosaminyl-(1-&gt;4)]-N-acetyl-alpha-D-muramoyl-L-alanyl-D-glutamyl-meso-2,6-diaminopimeloyl-D-alanyl-D-alanine + UDP + H(+). The protein operates within cell wall biogenesis; peptidoglycan biosynthesis. Cell wall formation. Catalyzes the transfer of a GlcNAc subunit on undecaprenyl-pyrophosphoryl-MurNAc-pentapeptide (lipid intermediate I) to form undecaprenyl-pyrophosphoryl-MurNAc-(pentapeptide)GlcNAc (lipid intermediate II). The chain is UDP-N-acetylglucosamine--N-acetylmuramyl-(pentapeptide) pyrophosphoryl-undecaprenol N-acetylglucosamine transferase from Bacillus cytotoxicus (strain DSM 22905 / CIP 110041 / 391-98 / NVH 391-98).